The primary structure comprises 166 residues: Arginine repressor (166 aa).

It belongs to the ArgR family.

It is found in the cytoplasm. It functions in the pathway amino-acid biosynthesis; L-arginine biosynthesis [regulation]. Functionally, regulates arginine biosynthesis genes. The sequence is that of Arginine repressor from Mycobacterium ulcerans (strain Agy99).